The chain runs to 64 residues: Large ribosomal subunit protein bL35 (64 aa).

Composition is skewed to basic residues over residues 1–15 (MPKN…KRFK) and 27–42 (AGKR…KKTR). Positions 1 to 45 (MPKNKTHSGASKRFKITGSGKVLRERAGKRHLLEHKSSKKTRSLT) are disordered.

It belongs to the bacterial ribosomal protein bL35 family.

The sequence is that of Large ribosomal subunit protein bL35 from Streptomyces griseus subsp. griseus (strain JCM 4626 / CBS 651.72 / NBRC 13350 / KCC S-0626 / ISP 5235).